We begin with the raw amino-acid sequence, 113 residues long: MSQEIYDYANQLERAVRALPEYQKVLEVKEAIQADASTSQLFDEFVAMQEKIQGMMQSGQMPTAEEQTSIQELSQKIEANDQLKAYFEAQQALSVYMSDIERIVFAPLKDLVK.

It belongs to the UPF0342 family.

The polypeptide is UPF0342 protein SpyM3_0545 (Streptococcus pyogenes serotype M3 (strain ATCC BAA-595 / MGAS315)).